A 160-amino-acid chain; its full sequence is Ribosomal RNA large subunit methyltransferase H (160 aa).

S-adenosyl-L-methionine is bound by residues Leu78, Gly109, and 128–133; that span reads LSNLTL.

The protein belongs to the RNA methyltransferase RlmH family. In terms of assembly, homodimer.

It localises to the cytoplasm. It catalyses the reaction pseudouridine(1915) in 23S rRNA + S-adenosyl-L-methionine = N(3)-methylpseudouridine(1915) in 23S rRNA + S-adenosyl-L-homocysteine + H(+). Functionally, specifically methylates the pseudouridine at position 1915 (m3Psi1915) in 23S rRNA. The polypeptide is Ribosomal RNA large subunit methyltransferase H (Alcanivorax borkumensis (strain ATCC 700651 / DSM 11573 / NCIMB 13689 / SK2)).